The following is a 99-amino-acid chain: Large ribosomal subunit protein uL23 (99 aa).

This sequence belongs to the universal ribosomal protein uL23 family. As to quaternary structure, part of the 50S ribosomal subunit. Contacts protein L29, and trigger factor when it is bound to the ribosome.

In terms of biological role, one of the early assembly proteins it binds 23S rRNA. One of the proteins that surrounds the polypeptide exit tunnel on the outside of the ribosome. Forms the main docking site for trigger factor binding to the ribosome. The protein is Large ribosomal subunit protein uL23 of Shewanella loihica (strain ATCC BAA-1088 / PV-4).